Here is a 689-residue protein sequence, read N- to C-terminus: MTTQNFLAEIGTEELPPKALKKLATAFAENVEAELNQAGLSFDKVEWFAAPRRLAVKVLGLATAQPSKEVEKRGPAVSAAFDAEGKPTKAAEGWAKGCGITVEQAERIATDKGEWLVHRAVIEGQPTKNLLVGIISQALAKLPIPKTMRWGDKTEQFVRPVHTVTLLLGDELIEGEILGVASGTTVRGHRFLGEREFQISHADQYPALLKEKGSVVADFNERKALILAKAQEKATALGGVADIEEDLLDEVTSLVEYPNVLAAKFEERFLAVPAEALVYTMKGDQKYFPIYDKDGKLLPHFIFVSNINPEDPSKIIEGNEKVVRPRLTDAEFFFKTDLKQRLEDQLPRLETVLFQQQLGTLRDKTARIEQLAGEIAKQIGADETKAKRAGLLSKCDLMTNMVFEFTDTQGVMGMHYARHDGEDEEVAVALNEQYMPRFAGDELPKSLVASSVALADKFDTLTGIFGIGQAPKGSADPFALRRAALGALRIIVEKNLPLDLSDLVATSAKLFGDKLTNSNVVEEVVDFMLGRFRAWYQDEGIAVDVIQAVLARRPTRPADFDARVRAVSHFRTLDSAEALAAANKRVSNILAKVEGKISSEIDRTLLVEAEEKALAEQVITLQAELVPLFEKGEYQTALDRLAGLREVVDNFFDKVMVNAEDPKLRQNRQAILNNLRNLFLQVADISLLQ.

This sequence belongs to the class-II aminoacyl-tRNA synthetase family. In terms of assembly, tetramer of two alpha and two beta subunits.

It is found in the cytoplasm. It catalyses the reaction tRNA(Gly) + glycine + ATP = glycyl-tRNA(Gly) + AMP + diphosphate. The protein is Glycine--tRNA ligase beta subunit of Glaesserella parasuis serovar 5 (strain SH0165) (Haemophilus parasuis).